A 118-amino-acid chain; its full sequence is Acidic phospholipase A2 CM-I (118 aa).

Disulfide bonds link Cys-11-Cys-70, Cys-26-Cys-117, Cys-28-Cys-44, Cys-43-Cys-98, Cys-50-Cys-91, Cys-59-Cys-84, and Cys-77-Cys-89. 3 residues coordinate Ca(2+): Tyr-27, Gly-29, and Gly-31. His-47 is a catalytic residue. Asp-48 contributes to the Ca(2+) binding site. Residue Asp-92 is part of the active site.

Belongs to the phospholipase A2 family. Group I subfamily. D49 sub-subfamily. Ca(2+) is required as a cofactor. In terms of tissue distribution, expressed by the venom gland.

The protein resides in the secreted. It catalyses the reaction a 1,2-diacyl-sn-glycero-3-phosphocholine + H2O = a 1-acyl-sn-glycero-3-phosphocholine + a fatty acid + H(+). Its function is as follows. Snake venom phospholipase A2 (PLA2) that causes myonecrosis when injected intramuscularly, shows indirect hemolytic activity, abolishes twitches evoked by indirect stimulation earlier than those by direct stimulation (in the mouse phrenic nerve-diaphragm preparation) but does not produce complete neuromuscular block (up to 30 ug/ml) (in the chick biventer cervicis nerve-muscle preparation). PLA2 catalyzes the calcium-dependent hydrolysis of the 2-acyl groups in 3-sn-phosphoglycerides. The polypeptide is Acidic phospholipase A2 CM-I (Naja mossambica (Mozambique spitting cobra)).